The chain runs to 235 residues: Retron Ec48 transmembrane protein (235 aa).

The next 2 helical transmembrane spans lie at 11 to 31 and 64 to 84; these read IVGVSSALFLIFSLISLFETI and AFGWLITTFVTVFGVMIALMT.

Its subcellular location is the cell inner membrane. In terms of biological role, membrane component of antiviral defense system Retron Ec48, composed of a non-coding RNA (ncRNA), a reverse transcriptase (RT) and this membrane protein. Expression of this retron confers protection against bacteriophages lambda, T2, T4, T5 and T7. At multiplicity of infection (MOI) of 0.02 cultures grow normally when infected with lambda without collapsing, at MOI 2 cultures enter growth stasis. At MOI 3 cell membranes are permeabilized within 15 minutes of infection but do not lyse, suggesting the phage are not able to finish a replication cycle. Antiviral defense is suppressed by mutations that knockout the lambda gam expression or phage T7 gp5.9 expression; both viral genes inhibit host RecBCD. The Ec48 retron may sense the integrity of the RecBCD enzyme; when RecBCD is perturbed by viral proteins the Ec48 effector (the membrane protein) is activated, leading to abortive infection and bacterial growth arrest. In Escherichia coli, this protein is Retron Ec48 transmembrane protein.